The following is a 923-amino-acid chain: Carnitine O-acetyltransferase YAT2 (923 aa).

The span at 1-11 (MSSGSTIVSSD) shows a compositional bias: polar residues. Disordered regions lie at residues 1 to 21 (MSSGSTIVSSDKSGRTFKHEE) and 197 to 232 (NKPYTASDLEDPDYSSDEDDNDEPTQKDFDDRKRKH). An N-acetylserine modification is found at S2. Over residues 12–21 (KSGRTFKHEE) the composition is skewed to basic and acidic residues. Positions 204–219 (DLEDPDYSSDEDDNDE) are enriched in acidic residues. Basic and acidic residues predominate over residues 220-232 (PTQKDFDDRKRKH). Residues 529–541 (GRRSAQRLGVKPD) and S567 each bind CoA. S576 provides a ligand contact to (R)-carnitine. Residues 763-787 (NAVNNPPKRNGHTVNGSRKTSSSSQ) form a disordered region. Over residues 774-787 (HTVNGSRKTSSSSQ) the composition is skewed to polar residues. Position 783 is a phosphoserine (S783).

Belongs to the carnitine/choline acetyltransferase family.

The protein localises to the cytoplasm. The catalysed reaction is (R)-carnitine + acetyl-CoA = O-acetyl-(R)-carnitine + CoA. In terms of biological role, carnitine O-acetyltransferase involved in the shutteling of acetyl-CoA in the cell. This is Carnitine O-acetyltransferase YAT2 from Saccharomyces cerevisiae (strain ATCC 204508 / S288c) (Baker's yeast).